Reading from the N-terminus, the 463-residue chain is Argininosuccinate lyase (463 aa).

Belongs to the lyase 1 family. Argininosuccinate lyase subfamily.

It is found in the cytoplasm. The catalysed reaction is 2-(N(omega)-L-arginino)succinate = fumarate + L-arginine. It functions in the pathway amino-acid biosynthesis; L-arginine biosynthesis; L-arginine from L-ornithine and carbamoyl phosphate: step 3/3. This is Argininosuccinate lyase from Chlorobaculum parvum (strain DSM 263 / NCIMB 8327) (Chlorobium vibrioforme subsp. thiosulfatophilum).